Consider the following 190-residue polypeptide: RING finger protein 227 (190 aa).

The RING-type zinc finger occupies 18-81; that stretch reads CNICYRPFNL…RRVVTCPFCR (64 aa). The interval 111–145 is disordered; that stretch reads KCERDEAGNPAKESSDADGEAEEEGESEKGAGPRS. The span at 126–136 shows a compositional bias: acidic residues; sequence DADGEAEEEGE.

In Homo sapiens (Human), this protein is RING finger protein 227.